An 874-amino-acid polypeptide reads, in one-letter code: Alanine--tRNA ligase (874 aa).

Zn(2+)-binding residues include histidine 564, histidine 568, cysteine 665, and histidine 669.

The protein belongs to the class-II aminoacyl-tRNA synthetase family. Zn(2+) is required as a cofactor.

The protein resides in the cytoplasm. It catalyses the reaction tRNA(Ala) + L-alanine + ATP = L-alanyl-tRNA(Ala) + AMP + diphosphate. Functionally, catalyzes the attachment of alanine to tRNA(Ala) in a two-step reaction: alanine is first activated by ATP to form Ala-AMP and then transferred to the acceptor end of tRNA(Ala). Also edits incorrectly charged Ser-tRNA(Ala) and Gly-tRNA(Ala) via its editing domain. This chain is Alanine--tRNA ligase, found in Burkholderia thailandensis (strain ATCC 700388 / DSM 13276 / CCUG 48851 / CIP 106301 / E264).